A 154-amino-acid chain; its full sequence is 6,7-dimethyl-8-ribityllumazine synthase (154 aa).

5-amino-6-(D-ribitylamino)uracil contacts are provided by residues Phe-22, Val-57–Glu-59, and Thr-81–Ile-83. Lys-86–Thr-87 is a binding site for (2S)-2-hydroxy-3-oxobutyl phosphate. The active-site Proton donor is the His-89. Val-114 is a binding site for 5-amino-6-(D-ribitylamino)uracil. Arg-128 is a (2S)-2-hydroxy-3-oxobutyl phosphate binding site.

Belongs to the DMRL synthase family. Forms an icosahedral capsid composed of 60 subunits, arranged as a dodecamer of pentamers.

The enzyme catalyses (2S)-2-hydroxy-3-oxobutyl phosphate + 5-amino-6-(D-ribitylamino)uracil = 6,7-dimethyl-8-(1-D-ribityl)lumazine + phosphate + 2 H2O + H(+). Its pathway is cofactor biosynthesis; riboflavin biosynthesis; riboflavin from 2-hydroxy-3-oxobutyl phosphate and 5-amino-6-(D-ribitylamino)uracil: step 1/2. Functionally, catalyzes the formation of 6,7-dimethyl-8-ribityllumazine by condensation of 5-amino-6-(D-ribitylamino)uracil with 3,4-dihydroxy-2-butanone 4-phosphate. This is the penultimate step in the biosynthesis of riboflavin. This Wigglesworthia glossinidia brevipalpis protein is 6,7-dimethyl-8-ribityllumazine synthase.